The chain runs to 276 residues: 3' cyclic ADP-D-ribose synthase HopAM1 (276 aa).

Residues 20-38 show a composition bias toward polar residues; sequence VEASQVKSAGTSSTTNIDS. Positions 20–39 are disordered; sequence VEASQVKSAGTSSTTNIDSK. Residues 165–214 form a TIR domain region; it reads KNGIAHAKKMAFFITPEWLGSDFCKQEFQWLSETKNKDIKSAFVIFKDVD. Gln190 is a catalytic residue.

In terms of assembly, homodimer.

The protein resides in the host cytoplasm. Its subcellular location is the host cytosol. The enzyme catalyses NAD(+) = 3'cADPR + nicotinamide + H(+). Functionally, NAD(+) hydrolase (NADase) that cleaves NAD(+) into nicotinamide and 3' cyclic ADP-D-ribose (3'cADPR, v2-cADPR). Upon infiltration of A.thaliana with this bacteria an effector-triggered immunity-like phenotype (ETI-like, cell death with severe chlorosis) is seen, 3'cADPR levels rise while NAD(+) levels remain constant. Plant immune responses are suppressed. Triggers hypersensitive response-like cell death in Nicotiana tabacum cv. Xanthi and N.benthamiana when transiently expressed, depletes NAD(+) in N.benthamiana. Causes cell death upon induction in yeast due to NAD(+) depletion and/or 3'cADPR itself. Transgenic A.thaliana expressing HopAM1 suppresses its plant immune system upon challenge; the plants produce 3'cADPR without significantly depleting NAD(+). This is 3' cyclic ADP-D-ribose synthase HopAM1 from Pseudomonas syringae pv. tomato (strain ATCC BAA-871 / DC3000).